Here is a 341-residue protein sequence, read N- to C-terminus: tRNA N6-adenosine threonylcarbamoyltransferase (341 aa).

His113 and His117 together coordinate Fe cation. Substrate contacts are provided by residues 141–145 (LVSGG), Asp174, Gly187, and Asn282. Residue Asp310 participates in Fe cation binding.

The protein belongs to the KAE1 / TsaD family. The cofactor is Fe(2+).

The protein localises to the cytoplasm. It carries out the reaction L-threonylcarbamoyladenylate + adenosine(37) in tRNA = N(6)-L-threonylcarbamoyladenosine(37) in tRNA + AMP + H(+). Required for the formation of a threonylcarbamoyl group on adenosine at position 37 (t(6)A37) in tRNAs that read codons beginning with adenine. Is involved in the transfer of the threonylcarbamoyl moiety of threonylcarbamoyl-AMP (TC-AMP) to the N6 group of A37, together with TsaE and TsaB. TsaD likely plays a direct catalytic role in this reaction. The polypeptide is tRNA N6-adenosine threonylcarbamoyltransferase (Porphyromonas gingivalis (strain ATCC BAA-308 / W83)).